An 899-amino-acid polypeptide reads, in one-letter code: Toll-like receptor 4 (899 aa).

The signal sequence occupies residues 1–46 (MCPLQIHVLHLIQGNQKNRKGKYVNMTRQLWYILPLLFLLCHCVTS). Residues Asn-25, Asn-75, Asn-83, and Asn-93 are each glycosylated (N-linked (GlcNAc...) asparagine). At 47 to 702 (ERRCYFSKIS…LERNCRSYTA (656 aa)) the chain is on the extracellular side. LRR repeat units follow at residues 83–103 (NESVVQIDLSNNSINVFPDLP), 104–126 (RSLLVLDISRNPLKQFQKNAFAR), 128–150 (QNLTTLSIVNNTYGLQPSNLTAG), 155–179 (LTRLTYLDLRGSWNGTAYPEEVLSD), 181–202 (VSLNALRINGKQKGFGVLMRKI), 203–229 (HALKRLDISGSEGDCKIDCLHAGYFQN), and 230–253 (VHGIQELNVSNCHLTNILEGTFSY). Residues Asn-129, Asn-137, Asn-146, and Asn-168 are each glycosylated (N-linked (GlcNAc...) asparagine). Asn-237, Asn-256, Asn-275, and Asn-313 each carry an N-linked (GlcNAc...) asparagine glycan. LRR repeat units follow at residues 257–282 (LTHLDISYNEELSFNILRNISKDLKN), 313–336 (NTSLRELHANSNRLETIQSGVLMY), 338–360 (PKTLQHASVSDNKLTMGMYALET), and 363–386 (LVNLKTYDMSLQFKSHDPRDIFSN). Residues Asn-388, Asn-432, and Asn-463 are each glycosylated (N-linked (GlcNAc...) asparagine). 7 LRR repeats span residues 468 to 493 (HYPLLKYRIGNNKIKEIYAQDNVFYD), 501 to 524 (LEGLEILDLSNNFCTNLSTFFFDY), 526 to 549 (TGLKSVKLNHNILGFSLAKDEKGE), 554 to 577 (LLKLKHLEIKYNRIQVLPKKILRN), 579 to 601 (ISLETLDLADNWLRKFKVDLKHI), 602 to 624 (KGLRHIDLSNNQISELPPGVMRE), and 631 to 654 (SSNLTVNLTGNSLLCNCENEHFLR). Asn-516 is a glycosylation site (N-linked (GlcNAc...) asparagine). 3 N-linked (GlcNAc...) asparagine glycosylation sites follow: Asn-633, Asn-637, and Asn-668. The helical transmembrane segment at 703–723 (VIVLFSCVFVILLTVIVCGVV) threads the bilayer. At 724–899 (YRYRWKLRYL…WRKLRDPISM (176 aa)) the chain is on the cytoplasmic side. A TIR domain is found at 756-897 (YEFDAFISYA…IFWRKLRDPI (142 aa)).

The protein belongs to the Toll-like receptor family. As to expression, expressed in all tissues tested. The highest expression is in the hepatopancreas, with moderate expression in the gills, and low expression in the gonads, adductor muscle, hemocytes, and mantle.

It is found in the cell membrane. In terms of biological role, may be involved in the innate immune response. The protein is Toll-like receptor 4 of Pinctada imbricata (Atlantic pearl-oyster).